The primary structure comprises 310 residues: Putative type II methyltransferase M.MJ0563P (310 aa).

In terms of domain architecture, SAM-dependent MTase C5-type spans 1 to 310; sequence MNVIDLFSGC…AIAKEIKKQL (310 aa). Residue C77 is part of the active site.

This sequence belongs to the class I-like SAM-binding methyltransferase superfamily. C5-methyltransferase family.

It carries out the reaction a 2'-deoxycytidine in DNA + S-adenosyl-L-methionine = a 5-methyl-2'-deoxycytidine in DNA + S-adenosyl-L-homocysteine + H(+). Its function is as follows. A putative methylase that may protect DNA from cleavage by an unknown endonuclease. This chain is Putative type II methyltransferase M.MJ0563P, found in Methanocaldococcus jannaschii (strain ATCC 43067 / DSM 2661 / JAL-1 / JCM 10045 / NBRC 100440) (Methanococcus jannaschii).